We begin with the raw amino-acid sequence, 98 residues long: uncharacterized protein (98 aa).

This is an uncharacterized protein from Dictyostelium discoideum (Social amoeba).